We begin with the raw amino-acid sequence, 95 residues long: uncharacterized protein (95 aa).

This is an uncharacterized protein from Haemophilus influenzae (strain ATCC 51907 / DSM 11121 / KW20 / Rd).